The primary structure comprises 66 residues: Large ribosomal subunit protein bL32 (66 aa).

Residues 1–19 (MAIVPKRKTSKQRKHKRNT) show a composition bias toward basic residues. The tract at residues 1–21 (MAIVPKRKTSKQRKHKRNTHS) is disordered.

Belongs to the bacterial ribosomal protein bL32 family.

This is Large ribosomal subunit protein bL32 from Mycoplasmopsis synoviae (strain 53) (Mycoplasma synoviae).